Consider the following 342-residue polypeptide: Protein-glutamate methylesterase/protein-glutamine glutaminase 1 (342 aa).

In terms of domain architecture, Response regulatory spans 2 to 119; sequence RVAIVNDMPL…GDPKAAAQRL (118 aa). A 4-aspartylphosphate modification is found at Asp-53. In terms of domain architecture, CheB-type methylesterase spans 146–329; that stretch reads SDTDAALVVI…LPLGDIAPRL (184 aa). Residues Ser-158, His-185, and Asp-278 contribute to the active site.

This sequence belongs to the CheB family. In terms of processing, phosphorylated by CheA. Phosphorylation of the N-terminal regulatory domain activates the methylesterase activity.

It localises to the cytoplasm. It catalyses the reaction [protein]-L-glutamate 5-O-methyl ester + H2O = L-glutamyl-[protein] + methanol + H(+). The catalysed reaction is L-glutaminyl-[protein] + H2O = L-glutamyl-[protein] + NH4(+). Functionally, involved in chemotaxis. Part of a chemotaxis signal transduction system that modulates chemotaxis in response to various stimuli. Catalyzes the demethylation of specific methylglutamate residues introduced into the chemoreceptors (methyl-accepting chemotaxis proteins or MCP) by CheR. Also mediates the irreversible deamidation of specific glutamine residues to glutamic acid. The protein is Protein-glutamate methylesterase/protein-glutamine glutaminase 1 of Bordetella avium (strain 197N).